Here is a 99-residue protein sequence, read N- to C-terminus: MALTKAEMAEHLFEKLGINKRDAKDLVELFFEEIKGALESGEQVKLSGFGNFDLRDKNERPGRNPKTGEDIPIKARRVVTFRPGQKLKSRVENSEPVDQ.

Belongs to the bacterial histone-like protein family. In terms of assembly, heterodimer of an alpha and a beta chain.

In terms of biological role, this protein is one of the two subunits of integration host factor, a specific DNA-binding protein that functions in genetic recombination as well as in transcriptional and translational control. In Alteromonas mediterranea (strain DSM 17117 / CIP 110805 / LMG 28347 / Deep ecotype), this protein is Integration host factor subunit alpha.